Reading from the N-terminus, the 213-residue chain is Kynurenine formamidase (213 aa).

Tryptophan 18 provides a ligand contact to substrate. Residues histidine 48, histidine 52, and aspartate 54 each contribute to the Zn(2+) site. The active-site Proton donor/acceptor is histidine 58. Residues histidine 160 and glutamate 172 each coordinate Zn(2+).

This sequence belongs to the Cyclase 1 superfamily. KynB family. In terms of assembly, homodimer. Zn(2+) is required as a cofactor.

The catalysed reaction is N-formyl-L-kynurenine + H2O = L-kynurenine + formate + H(+). It functions in the pathway amino-acid degradation; L-tryptophan degradation via kynurenine pathway; L-kynurenine from L-tryptophan: step 2/2. Its function is as follows. Catalyzes the hydrolysis of N-formyl-L-kynurenine to L-kynurenine, the second step in the kynurenine pathway of tryptophan degradation. The sequence is that of Kynurenine formamidase from Burkholderia pseudomallei (strain 668).